Here is a 90-residue protein sequence, read N- to C-terminus: Small ribosomal subunit protein bS16 (90 aa).

This sequence belongs to the bacterial ribosomal protein bS16 family.

In Bacillus licheniformis (strain ATCC 14580 / DSM 13 / JCM 2505 / CCUG 7422 / NBRC 12200 / NCIMB 9375 / NCTC 10341 / NRRL NRS-1264 / Gibson 46), this protein is Small ribosomal subunit protein bS16.